A 121-amino-acid chain; its full sequence is MRHYEIILMIHPDQSEQVPAMLERYKGMITAGGGKVHRVEDWGRRQLVYMINKLAKAHYLCVNIEADQAVMAELEHAFKFNDAVLRHLTVLKKKADTGPSSMMKTVEREDARKTQQAEYQA.

Residues 96–121 (DTGPSSMMKTVEREDARKTQQAEYQA) form a disordered region. Residues 105–115 (TVEREDARKTQ) are compositionally biased toward basic and acidic residues.

The protein belongs to the bacterial ribosomal protein bS6 family.

Its function is as follows. Binds together with bS18 to 16S ribosomal RNA. This Albidiferax ferrireducens (strain ATCC BAA-621 / DSM 15236 / T118) (Rhodoferax ferrireducens) protein is Small ribosomal subunit protein bS6.